We begin with the raw amino-acid sequence, 94 residues long: C-C motif chemokine 26 (94 aa).

An N-terminal signal peptide occupies residues 1–23 (MKSFPVAFLVLLIFILSVHRGVT). 2 disulfide bridges follow: C33–C57 and C34–C73.

This sequence belongs to the intercrine beta (chemokine CC) family. As to quaternary structure, monomer.

The protein resides in the secreted. Functionally, chemoattractant for eosinophils and basophils. Acts as a ligand for C-C chemokine receptor CCR3 which triggers Ca(2+) mobilization in eosinophils. Also acts as a ligand for CX3C chemokine receptor CX3CR1, inducing cell chemotaxis. This is C-C motif chemokine 26 from Canis lupus familiaris (Dog).